Here is a 57-residue protein sequence, read N- to C-terminus: MKTIIVLLLLTIVAAAVVESSPKARRQTECQIKNDCQRYCQSVKECKYGKCYCNYAG.

Residues 1–26 (MKTIIVLLLLTIVAAAVVESSPKARR) form the signal peptide. Disulfide bonds link Cys-30-Cys-46, Cys-36-Cys-51, and Cys-40-Cys-53.

This sequence belongs to the short scorpion toxin superfamily. Potassium channel inhibitor family. Alpha-KTx 17 subfamily. As to expression, expressed by the venom gland.

It localises to the secreted. In terms of biological role, inhibits voltage-gated potassium channels. The protein is Potassium channel toxin alpha-KTx 17.2 of Lychas mucronatus (Chinese swimming scorpion).